Here is a 129-residue protein sequence, read N- to C-terminus: Large-conductance mechanosensitive channel (129 aa).

2 consecutive transmembrane segments (helical) span residues 10–30 (FAVK…GAFG) and 70–90 (AVML…VIAI).

Belongs to the MscL family. In terms of assembly, homopentamer.

It localises to the cell inner membrane. In terms of biological role, channel that opens in response to stretch forces in the membrane lipid bilayer. May participate in the regulation of osmotic pressure changes within the cell. The protein is Large-conductance mechanosensitive channel of Actinobacillus pleuropneumoniae serotype 3 (strain JL03).